Reading from the N-terminus, the 410-residue chain is Putative competence-damage inducible protein (410 aa).

It belongs to the CinA family.

This chain is Putative competence-damage inducible protein, found in Clostridium beijerinckii (strain ATCC 51743 / NCIMB 8052) (Clostridium acetobutylicum).